Reading from the N-terminus, the 187-residue chain is Apolipophorin-3 (187 aa).

Positions 1-17 (MAAKFIILLALFALSQA) are cleaved as a signal peptide. The propeptide occupies 18-22 (SVVRR).

It belongs to the insect apolipophorin-3 family. In terms of assembly, equilibrium between a soluble monomer and a bound lipoprotein form. Apolipophorin-3 associates with lipophorin during lipid loading until each particle contains 9 or 14 molecules of apolipophorin-3. As to expression, hemolymph.

It is found in the secreted. Its function is as follows. Assists in the loading of diacylglycerol, generated from triacylglycerol stores in the fat body through the action of adipokinetic hormone, into lipophorin, the hemolymph lipoprotein. It increases the lipid carrying capacity of lipophorin by covering the expanding hydrophobic surface resulting from diacylglycerol uptake. It thus plays a critical role in the transport of lipids during flight in several species of insects. The protein is Apolipophorin-3 of Hyphantria cunea (Fall webworm moth).